Consider the following 173-residue polypeptide: Nicotinamide-nucleotide adenylyltransferase (173 aa).

Belongs to the archaeal NMN adenylyltransferase family.

The protein localises to the cytoplasm. It catalyses the reaction beta-nicotinamide D-ribonucleotide + ATP + H(+) = diphosphate + NAD(+). It functions in the pathway cofactor biosynthesis; NAD(+) biosynthesis; NAD(+) from nicotinamide D-ribonucleotide: step 1/1. This is Nicotinamide-nucleotide adenylyltransferase (ffdC) from Methanolobus tindarius.